A 452-amino-acid polypeptide reads, in one-letter code: Flavin-containing monooxygenase FMO GS-OX-like 4 (452 aa).

17 to 22 (GAGAAG) lines the FAD pocket. 217-222 (GNSASA) is an NADP(+) binding site.

The protein belongs to the FMO family. FAD serves as cofactor.

Its function is as follows. Catalyzes the conversion of methylthioalkyl glucosinolates of any chain length into methylsulfinylalkyl glucosinolates. In Arabidopsis thaliana (Mouse-ear cress), this protein is Flavin-containing monooxygenase FMO GS-OX-like 4.